Here is a 269-residue protein sequence, read N- to C-terminus: Regulatory protein RecX (269 aa).

Belongs to the RecX family.

Its subcellular location is the cytoplasm. Its function is as follows. Modulates RecA activity. The chain is Regulatory protein RecX from Listeria monocytogenes serotype 4b (strain CLIP80459).